The following is a 134-amino-acid chain: Large ribosomal subunit protein bL17 (134 aa).

This sequence belongs to the bacterial ribosomal protein bL17 family. As to quaternary structure, part of the 50S ribosomal subunit. Contacts protein L32.

In Colwellia psychrerythraea (strain 34H / ATCC BAA-681) (Vibrio psychroerythus), this protein is Large ribosomal subunit protein bL17.